Here is a 963-residue protein sequence, read N- to C-terminus: VPS35 endosomal protein-sorting factor-like (963 aa).

Residues 43–69 (SKTKKVNRKGSTSSTSSSSSSSVVDPL) form a disordered region. Residues 53 to 69 (STSSTSSSSSSSVVDPL) are compositionally biased toward low complexity. Phosphoserine is present on Ser-265. Residues 703–719 (ACVAYCFITIPSLAGIF) traverse the membrane as a helical segment.

The protein belongs to the VPS35L family. In terms of assembly, component of the heterotrimeric retriever complex formed by VPS26C, VPS29 and VPS35L. Interacts with VPS29. Interacts with COMMD1, CCDC93 and CCDC22; associates with the CCC (COMMD/CCDC22/CCDC93) complex which contains at least COMMD1 (and possibly other COMM domain-containing proteins), CCDC22 and CCDC93. Interacts with WASHC1, WASHC2A and WASHC2C. Interacts with SNX17 and SNX31.

Its subcellular location is the membrane. The protein localises to the endosome. Functionally, acts as a component of the retriever complex. The retriever complex is a heterotrimeric complex related to retromer cargo-selective complex (CSC) and essential for retromer-independent retrieval and recycling of numerous cargos such as integrin alpha-5/beta-1 (ITGA5:ITGB1). The recruitment of the retriever complex to the endosomal membrane involves CCC and WASH complexes. In the endosomes, drives the retrieval and recycling of NxxY-motif-containing cargo proteins by coupling to SNX17, a cargo essential for the homeostatic maintenance of numerous cell surface proteins associated with processes that include cell migration, cell adhesion, nutrient supply and cell signaling. Involved in copper-dependent ATP7A trafficking between the trans-Golgi network and vesicles in the cell periphery; the function is proposed to depend on its association with the CCC complex and cooperation with the WASH complex on early endosomes. Seems not to be required for CCC complex stability. (Microbial infection) The heterotrimeric retriever complex, in collaboration with the CCC complex, mediates the exit of human papillomavirus to the cell surface. The polypeptide is VPS35 endosomal protein-sorting factor-like (Homo sapiens (Human)).